Here is a 123-residue protein sequence, read N- to C-terminus: Small ribosomal subunit protein uS12 (123 aa).

Positions 1 to 28 (MPTIQQLIRKPRQPKVKRSKSQHLESCP) are disordered. Over residues 9–21 (RKPRQPKVKRSKS) the composition is skewed to basic residues. Asp-89 carries the 3-methylthioaspartic acid modification.

The protein belongs to the universal ribosomal protein uS12 family. Part of the 30S ribosomal subunit. Contacts proteins S8 and S17. May interact with IF1 in the 30S initiation complex.

In terms of biological role, with S4 and S5 plays an important role in translational accuracy. Interacts with and stabilizes bases of the 16S rRNA that are involved in tRNA selection in the A site and with the mRNA backbone. Located at the interface of the 30S and 50S subunits, it traverses the body of the 30S subunit contacting proteins on the other side and probably holding the rRNA structure together. The combined cluster of proteins S8, S12 and S17 appears to hold together the shoulder and platform of the 30S subunit. The chain is Small ribosomal subunit protein uS12 from Dinoroseobacter shibae (strain DSM 16493 / NCIMB 14021 / DFL 12).